A 344-amino-acid chain; its full sequence is Holliday junction branch migration complex subunit RuvB (344 aa).

The segment at 1-181 (MERIVTPAEM…FGVLCAMEYY (181 aa)) is large ATPase domain (RuvB-L). Residues Leu20, Arg21, Gly62, Lys65, Thr66, Thr67, 128 to 130 (EDY), Arg171, Tyr181, and Arg218 each bind ATP. Position 66 (Thr66) interacts with Mg(2+). A small ATPAse domain (RuvB-S) region spans residues 182 to 252 (DENQLKEIVI…EAREALELLE (71 aa)). The interval 255–344 (NQGFDKVDNK…SNKGQTSFFK (90 aa)) is head domain (RuvB-H). DNA-binding residues include Arg310 and Arg315.

It belongs to the RuvB family. Homohexamer. Forms an RuvA(8)-RuvB(12)-Holliday junction (HJ) complex. HJ DNA is sandwiched between 2 RuvA tetramers; dsDNA enters through RuvA and exits via RuvB. An RuvB hexamer assembles on each DNA strand where it exits the tetramer. Each RuvB hexamer is contacted by two RuvA subunits (via domain III) on 2 adjacent RuvB subunits; this complex drives branch migration. In the full resolvosome a probable DNA-RuvA(4)-RuvB(12)-RuvC(2) complex forms which resolves the HJ.

The protein localises to the cytoplasm. It catalyses the reaction ATP + H2O = ADP + phosphate + H(+). Its function is as follows. The RuvA-RuvB-RuvC complex processes Holliday junction (HJ) DNA during genetic recombination and DNA repair, while the RuvA-RuvB complex plays an important role in the rescue of blocked DNA replication forks via replication fork reversal (RFR). RuvA specifically binds to HJ cruciform DNA, conferring on it an open structure. The RuvB hexamer acts as an ATP-dependent pump, pulling dsDNA into and through the RuvAB complex. RuvB forms 2 homohexamers on either side of HJ DNA bound by 1 or 2 RuvA tetramers; 4 subunits per hexamer contact DNA at a time. Coordinated motions by a converter formed by DNA-disengaged RuvB subunits stimulates ATP hydrolysis and nucleotide exchange. Immobilization of the converter enables RuvB to convert the ATP-contained energy into a lever motion, pulling 2 nucleotides of DNA out of the RuvA tetramer per ATP hydrolyzed, thus driving DNA branch migration. The RuvB motors rotate together with the DNA substrate, which together with the progressing nucleotide cycle form the mechanistic basis for DNA recombination by continuous HJ branch migration. Branch migration allows RuvC to scan DNA until it finds its consensus sequence, where it cleaves and resolves cruciform DNA. This Clostridium botulinum (strain Alaska E43 / Type E3) protein is Holliday junction branch migration complex subunit RuvB.